The chain runs to 351 residues: Anthranilate phosphoribosyltransferase (351 aa).

5-phospho-alpha-D-ribose 1-diphosphate contacts are provided by residues Gly-89, 92-93, Thr-97, 99-102, 117-125, and Ser-129; these read GD, NIST, and KHGNRSASG. Residue Gly-89 participates in anthranilate binding. Residue Ser-101 coordinates Mg(2+). Asn-120 contributes to the anthranilate binding site. Arg-175 lines the anthranilate pocket. Asp-234 and Glu-235 together coordinate Mg(2+).

It belongs to the anthranilate phosphoribosyltransferase family. In terms of assembly, homodimer. The cofactor is Mg(2+).

It catalyses the reaction N-(5-phospho-beta-D-ribosyl)anthranilate + diphosphate = 5-phospho-alpha-D-ribose 1-diphosphate + anthranilate. Its pathway is amino-acid biosynthesis; L-tryptophan biosynthesis; L-tryptophan from chorismate: step 2/5. In terms of biological role, catalyzes the transfer of the phosphoribosyl group of 5-phosphorylribose-1-pyrophosphate (PRPP) to anthranilate to yield N-(5'-phosphoribosyl)-anthranilate (PRA). In Synechococcus sp. (strain CC9902), this protein is Anthranilate phosphoribosyltransferase.